The sequence spans 449 residues: Tubulin beta-4 chain (449 aa).

Positions 1-4 (MREI) match the MREI motif motif. Q11, E69, S138, G142, T143, G144, N204, and N226 together coordinate GTP. Residue E69 participates in Mg(2+) binding. The segment at 421–449 (EYQQYQDATAEEEGEMYEDDEEESEQGAK) is disordered. Positions 429–449 (TAEEEGEMYEDDEEESEQGAK) are enriched in acidic residues. E438 carries the 5-glutamyl polyglutamate modification. At S444 the chain carries Phosphoserine.

This sequence belongs to the tubulin family. Dimer of alpha and beta chains. A typical microtubule is a hollow water-filled tube with an outer diameter of 25 nm and an inner diameter of 15 nM. Alpha-beta heterodimers associate head-to-tail to form protofilaments running lengthwise along the microtubule wall with the beta-tubulin subunit facing the microtubule plus end conferring a structural polarity. Microtubules usually have 13 protofilaments but different protofilament numbers can be found in some organisms and specialized cells. Mg(2+) serves as cofactor. Post-translationally, some glutamate residues at the C-terminus are polyglycylated, resulting in polyglycine chains on the gamma-carboxyl group. Glycylation is mainly limited to tubulin incorporated into axonemes (cilia and flagella) whereas glutamylation is prevalent in neuronal cells, centrioles, axonemes, and the mitotic spindle. Both modifications can coexist on the same protein on adjacent residues, and lowering polyglycylation levels increases polyglutamylation, and reciprocally. The precise function of polyglycylation is still unclear. Some glutamate residues at the C-terminus are polyglutamylated, resulting in polyglutamate chains on the gamma-carboxyl group. Polyglutamylation plays a key role in microtubule severing by spastin (SPAST). SPAST preferentially recognizes and acts on microtubules decorated with short polyglutamate tails: severing activity by SPAST increases as the number of glutamates per tubulin rises from one to eight, but decreases beyond this glutamylation threshold. As to expression, neuron specific.

The protein resides in the cytoplasm. It is found in the cytoskeleton. Tubulin is the major constituent of microtubules, a cylinder consisting of laterally associated linear protofilaments composed of alpha- and beta-tubulin heterodimers. Microtubules grow by the addition of GTP-tubulin dimers to the microtubule end, where a stabilizing cap forms. Below the cap, tubulin dimers are in GDP-bound state, owing to GTPase activity of alpha-tubulin. This chain is Tubulin beta-4 chain, found in Gallus gallus (Chicken).